The following is a 284-amino-acid chain: Sulfotransferase 4A1 (284 aa).

Residues T8, T11, and T205 each carry the phosphothreonine modification.

This sequence belongs to the sulfotransferase 1 family. As to expression, highly expressed in the cerebral cortex and frontal lobe, slightly less in the cerebellum, occipital and temporal lobes, relatively low in the medulla and putamen, and lowest in the spinal cord. No expression detected in the pancreas. Highly expressed in fetal brain and occipital lobe, slightly less in the whole brain, frontal lobe, hippocampus, and lung, very low expression in cerebellum, medulla oblongata, temporal lobe, testis, kidney and appendix.

The protein resides in the cytoplasm. In terms of biological role, atypical sulfotransferase family member with very low affinity for 3'-phospho-5'-adenylyl sulfate (PAPS) and very low catalytic activity towards L-triiodothyronine, thyroxine, estrone, p-nitrophenol, 2-naphthylamine, and 2-beta-naphthol. May have a role in the metabolism of drugs and neurotransmitters in the CNS. The chain is Sulfotransferase 4A1 (SULT4A1) from Homo sapiens (Human).